A 396-amino-acid polypeptide reads, in one-letter code: Elongation factor Tu (396 aa).

In terms of domain architecture, tr-type G spans 11-205 (KPHVNIGTIG…TVDEYVPTPE (195 aa)). A G1 region spans residues 20–27 (GHVDHGKT). Position 20–27 (20–27 (GHVDHGKT)) interacts with GTP. Mg(2+) is bound at residue threonine 27. The interval 61-65 (GITIN) is G2. The interval 82-85 (DAPG) is G3. GTP-binding positions include 82–86 (DAPGH) and 137–140 (NKTD). Residues 137 to 140 (NKTD) form a G4 region. Residues 175-177 (SAL) are G5.

It belongs to the TRAFAC class translation factor GTPase superfamily. Classic translation factor GTPase family. EF-Tu/EF-1A subfamily. In terms of assembly, monomer.

It localises to the cytoplasm. It catalyses the reaction GTP + H2O = GDP + phosphate + H(+). GTP hydrolase that promotes the GTP-dependent binding of aminoacyl-tRNA to the A-site of ribosomes during protein biosynthesis. The chain is Elongation factor Tu from Latilactobacillus sakei subsp. sakei (strain 23K) (Lactobacillus sakei subsp. sakei).